The chain runs to 256 residues: UPF0246 protein Maqu_2499 (256 aa).

The protein belongs to the UPF0246 family.

The chain is UPF0246 protein Maqu_2499 from Marinobacter nauticus (strain ATCC 700491 / DSM 11845 / VT8) (Marinobacter aquaeolei).